The primary structure comprises 286 residues: Ribosomal RNA small subunit methyltransferase I (286 aa).

This sequence belongs to the methyltransferase superfamily. RsmI family.

Its subcellular location is the cytoplasm. It catalyses the reaction cytidine(1402) in 16S rRNA + S-adenosyl-L-methionine = 2'-O-methylcytidine(1402) in 16S rRNA + S-adenosyl-L-homocysteine + H(+). Functionally, catalyzes the 2'-O-methylation of the ribose of cytidine 1402 (C1402) in 16S rRNA. The protein is Ribosomal RNA small subunit methyltransferase I of Escherichia coli O157:H7.